We begin with the raw amino-acid sequence, 532 residues long: Eukaryotic translation initiation factor 4B1 (532 aa).

3 disordered regions span residues glutamate 16 to glutamine 365, lysine 401 to glycine 434, and arginine 451 to tryptophan 532. Residues alanine 26–threonine 35 show a composition bias toward low complexity. 2 stretches are compositionally biased toward gly residues: residues arginine 105 to arginine 120 and tryptophan 132 to glycine 147. The segment covering arginine 167–proline 180 has biased composition (basic and acidic residues). A Nuclear localization signal 1 motif is present at residues glutamate 177–phenylalanine 184. Over residues serine 193 to leucine 217 the composition is skewed to gly residues. Residues serine 237–phenylalanine 244 carry the Nuclear localization signal 2 motif. Low complexity predominate over residues serine 237–serine 247. Basic and acidic residues-rich tracts occupy residues glutamine 249–glutamate 263 and arginine 286–lysine 310. The segment covering threonine 315–serine 337 has biased composition (low complexity). 4 stretches are compositionally biased toward basic and acidic residues: residues alanine 355–glutamine 365, lysine 401–aspartate 416, glutamate 472–arginine 494, and asparagine 507–glycine 520.

Belongs to the eIF-4 subunit B family. As to quaternary structure, homodimer. Nonspherical monomer. mRNA-discriminating component of initiation complexes. In terms of processing, phosphorylated.

It localises to the nucleus. Functionally, promotes the eIF4F and eIF4A RNA-dependent ATP-hydrolysis activity with different efficiency depending on mRNAs, thus providing mRNA discrimination during initiation of translation. This Arabidopsis thaliana (Mouse-ear cress) protein is Eukaryotic translation initiation factor 4B1.